The sequence spans 222 residues: UPF0502 protein XCV4380 (222 aa).

It belongs to the UPF0502 family.

In Xanthomonas euvesicatoria pv. vesicatoria (strain 85-10) (Xanthomonas campestris pv. vesicatoria), this protein is UPF0502 protein XCV4380.